A 546-amino-acid chain; its full sequence is CTP synthase (546 aa).

Residues 1 to 267 (MSKFVFVTGG…AQQTLELLNL (267 aa)) form an amidoligase domain region. Residue S13 coordinates CTP. Residue S13 participates in UTP binding. ATP-binding positions include 14–19 (SIGKGI) and D71. Residues D71 and E141 each coordinate Mg(2+). CTP-binding positions include 148-150 (DIE), 188-193 (KTKPTQ), and K224. Residues 188-193 (KTKPTQ) and K224 contribute to the UTP site. A Glutamine amidotransferase type-1 domain is found at 292–534 (EIAIVGKYVQ…MKAALKGREE (243 aa)). G354 provides a ligand contact to L-glutamine. The Nucleophile; for glutamine hydrolysis role is filled by C381. L-glutamine is bound by residues 382–385 (LGMQ), E405, and R462. Active-site residues include H507 and E509.

The protein belongs to the CTP synthase family. Homotetramer.

It catalyses the reaction UTP + L-glutamine + ATP + H2O = CTP + L-glutamate + ADP + phosphate + 2 H(+). The enzyme catalyses L-glutamine + H2O = L-glutamate + NH4(+). It carries out the reaction UTP + NH4(+) + ATP = CTP + ADP + phosphate + 2 H(+). It participates in pyrimidine metabolism; CTP biosynthesis via de novo pathway; CTP from UDP: step 2/2. With respect to regulation, allosterically activated by GTP, when glutamine is the substrate; GTP has no effect on the reaction when ammonia is the substrate. The allosteric effector GTP functions by stabilizing the protein conformation that binds the tetrahedral intermediate(s) formed during glutamine hydrolysis. Inhibited by the product CTP, via allosteric rather than competitive inhibition. In terms of biological role, catalyzes the ATP-dependent amination of UTP to CTP with either L-glutamine or ammonia as the source of nitrogen. Regulates intracellular CTP levels through interactions with the four ribonucleotide triphosphates. The sequence is that of CTP synthase from Microcystis aeruginosa (strain NIES-843 / IAM M-2473).